The chain runs to 315 residues: DNA-directed RNA polymerase subunit alpha (315 aa).

The alpha N-terminal domain (alpha-NTD) stretch occupies residues 1 to 228 (MLEIEKPKIE…EHLRLFIGLT (228 aa)). The tract at residues 245–315 (KDKILEMTIE…LGLGFRKADD (71 aa)) is alpha C-terminal domain (alpha-CTD).

Belongs to the RNA polymerase alpha chain family. Homodimer. The RNAP catalytic core consists of 2 alpha, 1 beta, 1 beta' and 1 omega subunit. When a sigma factor is associated with the core the holoenzyme is formed, which can initiate transcription.

It catalyses the reaction RNA(n) + a ribonucleoside 5'-triphosphate = RNA(n+1) + diphosphate. DNA-dependent RNA polymerase catalyzes the transcription of DNA into RNA using the four ribonucleoside triphosphates as substrates. This chain is DNA-directed RNA polymerase subunit alpha, found in Desulfitobacterium hafniense (strain DSM 10664 / DCB-2).